Reading from the N-terminus, the 699-residue chain is MAREYKIEDYRNFGIMAHIDAGKTTTTERILYYTGKSHKIGEVHDGAATMDWMEQEQERGITITSAATTTYWKGRDGKTRRFNIIDTPGHVDFTIEVERSLRVLDGAIALLDANAGVEPQTETVWRQAEKYNVPRMIFCNKMDKTGADFYRSVEMIKTRLGATAVVMQLPIGAETEFKGVIDLIEMNALIWRDESLGAQWDVVEIPEDMKAKAEEYREKLIETVVEIDEAATEAYLEGNLPDNDQIRALVRRGTIDVKFHPMFCGTAFKNKGVQPLLDAVVDYLPSPLDIPAIKGIDFKTDAEIERHADDSEPLSMLAFKIMNDPFVGSLTFARIYSGKLEKGASVMNTVKDKRERVGRMLQMHSNSREDIEEAFAGDIVALAGLKETTTGDTLCDPLKPVILERMEFPEPVIQIAIEPKTKGDQEKMGLALNRLAAEDPSFRVKTDQESGQTIIAGMGELHLDIIVDRMRREFKVEATVGAPQVAYRETITRLTEKDYTHKKQSGGTGQFARVKIVFEPNPEGDDFKFESKIVGGSVPKEYIPGVQKGIESVLSSGPLAGFPMLGVKATLIDGAFHDVDSSVLAFEIASRACFREAAREAGAQLLEPMMKVEVVTPEDYVGDVIGDLNSRRGQIQGQEARGIAVVINANVPLANMFKYVDNLRSMSQGRAQYTMTFDHYAPVPSNVAQEIQAKYSGQK.

In terms of domain architecture, tr-type G spans 8–288 (EDYRNFGIMA…AVVDYLPSPL (281 aa)). Residues 17 to 24 (AHIDAGKT), 86 to 90 (DTPGH), and 140 to 143 (NKMD) contribute to the GTP site.

The protein belongs to the TRAFAC class translation factor GTPase superfamily. Classic translation factor GTPase family. EF-G/EF-2 subfamily.

The protein localises to the cytoplasm. Functionally, catalyzes the GTP-dependent ribosomal translocation step during translation elongation. During this step, the ribosome changes from the pre-translocational (PRE) to the post-translocational (POST) state as the newly formed A-site-bound peptidyl-tRNA and P-site-bound deacylated tRNA move to the P and E sites, respectively. Catalyzes the coordinated movement of the two tRNA molecules, the mRNA and conformational changes in the ribosome. The sequence is that of Elongation factor G from Rhizobium rhizogenes (strain K84 / ATCC BAA-868) (Agrobacterium radiobacter).